The following is a 188-amino-acid chain: PRA1 family protein 3 (188 aa).

Residue M1 is modified to N-acetylmethionine. Over 1–35 (MDVNIAPLRAWDDFFPGSDRFAQPDFRDISKWNNR) the chain is Cytoplasmic. Helical transmembrane passes span 36 to 56 (VVSN…MMIS) and 57 to 77 (VVGF…VLVF). At 78 to 93 (TGFVWAAHNKDALRRL) the chain is on the cytoplasmic side. Helical transmembrane passes span 94–114 (KKRY…FLIS) and 115–135 (MFGG…LMFI). Residues 103–117 (MVVMLASYFLISMFG) are required for homodimer formation and heterodimer formation with ARL6IP1. At 136 to 188 (HASLRLRNLKNKLENKMEGIGLKRTPMGIVLDALEQQEEGINRLTDYISKVKE) the chain is on the cytoplasmic side. A targeting to endoplasmic reticulum membrane region spans residues 136–188 (HASLRLRNLKNKLENKMEGIGLKRTPMGIVLDALEQQEEGINRLTDYISKVKE).

The protein belongs to the PRA1 family. In terms of assembly, homodimer. Heterodimer with ARL6IP1. Forms multimers. Interacts with ARL6. Interacts with prenylated RAB1A and RAB3A. Interacts with SLC1A1/EAAC1. Interacts with RTN2 (via first transmembrane domain). Does not interact with VAMP1, VAMP2 or VAMP3.

The protein resides in the endoplasmic reticulum membrane. It localises to the cell membrane. The protein localises to the cytoplasm. Its subcellular location is the cytoskeleton. Regulates intracellular concentrations of taurine and glutamate. Negatively modulates SLC1A1/EAAC1 glutamate transport activity by decreasing its affinity for glutamate in a PKC activity-dependent manner. Plays a role in the retention of SLC1A1/EAAC1 in the endoplasmic reticulum. The chain is PRA1 family protein 3 (ARL6IP5) from Macaca fascicularis (Crab-eating macaque).